The sequence spans 614 residues: Probable NOT transcription complex subunit VIP2 (614 aa).

Disordered regions lie at residues 1-46, 58-89, and 361-391; these read MSNL…NLQG, NMQG…SSGR, and NLGA…GLRP. Residues 364–381 show a composition bias toward polar residues; that stretch reads ATYSSHRPQQQPQHTSST.

Belongs to the CNOT2/3/5 family. Interacts with Agrobacterium tumefaciens VirE2. Binds to VIP1. Forms a complex made of Agrobacterium VirE2, VIP1, VIP2 and single-stranded DNA (ssDNA).

The protein resides in the nucleus. In terms of biological role, transcriptional regulator required for Agrobacterium-mediated stable genetic transformation by T-DNA integration in host genome, but not for T-DNA transient expression. This chain is Probable NOT transcription complex subunit VIP2 (VIP2), found in Arabidopsis thaliana (Mouse-ear cress).